A 252-amino-acid polypeptide reads, in one-letter code: Protein GrpE (252 aa).

Polar residues predominate over residues Met-1–Asn-22. The segment at Met-1–Ser-70 is disordered.

This sequence belongs to the GrpE family. Homodimer.

The protein localises to the cytoplasm. Functionally, participates actively in the response to hyperosmotic and heat shock by preventing the aggregation of stress-denatured proteins, in association with DnaK and GrpE. It is the nucleotide exchange factor for DnaK and may function as a thermosensor. Unfolded proteins bind initially to DnaJ; upon interaction with the DnaJ-bound protein, DnaK hydrolyzes its bound ATP, resulting in the formation of a stable complex. GrpE releases ADP from DnaK; ATP binding to DnaK triggers the release of the substrate protein, thus completing the reaction cycle. Several rounds of ATP-dependent interactions between DnaJ, DnaK and GrpE are required for fully efficient folding. In Thermosynechococcus vestitus (strain NIES-2133 / IAM M-273 / BP-1), this protein is Protein GrpE.